The sequence spans 264 residues: tRNA pseudouridine synthase A (264 aa).

Residue Asp51 is the Nucleophile of the active site. Tyr109 contacts substrate.

This sequence belongs to the tRNA pseudouridine synthase TruA family. Homodimer.

It catalyses the reaction uridine(38/39/40) in tRNA = pseudouridine(38/39/40) in tRNA. In terms of biological role, formation of pseudouridine at positions 38, 39 and 40 in the anticodon stem and loop of transfer RNAs. This is tRNA pseudouridine synthase A from Actinobacillus succinogenes (strain ATCC 55618 / DSM 22257 / CCUG 43843 / 130Z).